The chain runs to 553 residues: Expansin-like protein 7 (553 aa).

Residues 1–19 form the signal peptide; it reads MRLLGSLILTLSLIASAFS. N39 carries N-linked (GlcNAc...) asparagine glycosylation. The Expansin-like EG45 domain maps to 41–139; sequence SGSCEYGAYN…RKVSCDASGP (99 aa). Disulfide bonds link C44–C73 and C76–C134. N-linked (GlcNAc...) asparagine glycosylation is found at N276, N325, and N406. 2 disordered regions span residues 421 to 447 and 460 to 531; these read GGSG…SSTA and SSSA…DEHH. 2 stretches are compositionally biased toward low complexity: residues 460–476 and 484–493; these read SSSA…AGGK and ISTSGITGSG. Residues 497–516 are compositionally biased toward polar residues; sequence AASTSKTTSNPTGKTTGMTG. Basic and acidic residues predominate over residues 520 to 531; that stretch reads DHSESHSSDEHH.

Belongs to the expansin family. Expansin A subfamily.

The protein localises to the secreted. Its function is as follows. May serve to lubricate the movement of the cellulose microfibrils during cell growth and wall extension and/or may serve to maintain the fluid state of the slug cell wall. Overexpression shows aberrant stalk formation. The sequence is that of Expansin-like protein 7 (expl7) from Dictyostelium discoideum (Social amoeba).